The following is a 1336-amino-acid chain: Adhesion G protein-coupled receptor A2 (1336 aa).

The N-terminal stretch at 1-33 (MGAGGRRMPVPPARLLLLPLLPCLLLLAPGTRG) is a signal peptide. At 34 to 769 (APGCPVPIRG…AGGSGAGLHP (736 aa)) the chain is on the extracellular side. N-linked (GlcNAc...) asparagine glycosylation is found at asparagine 84 and asparagine 101. 4 LRR repeats span residues 85–106 (GTITLLLSNNKITGLRNGSFLG), 109–130 (LLEKLDLRSNVISTVQPGAFLG), 133–154 (ELKRLDLSNNRIGCLTSETFQG), and 157–178 (RLLRLNISGNIYSSLQPGVFDE). Asparagine 162 is a glycosylation site (N-linked (GlcNAc...) asparagine). The LRRCT domain occupies 190 to 241 (EFLTCDCRLRWLLPWARNHSLQLSERTLCAYPSALHAHALSSLQESQLRCEG). The 98-residue stretch at 247 to 344 (THYLIPSLRQ…GNTSKKVEIV (98 aa)) folds into the Ig-like domain. Cysteine 268 and cysteine 328 are oxidised to a cystine. Residue asparagine 275 is glycosylated (N-linked (GlcNAc...) asparagine). Positions 362-364 (RGD) match the RGD motif. Positions 594–757 (FRCTTGRPNI…AVLMELNAFP (164 aa)) constitute a GAIN-B domain. Asparagine 602, asparagine 691, and asparagine 735 each carry an N-linked (GlcNAc...) asparagine glycan. The interval 711–757 (AAWWNQDGPGGWSSEGCRLRYSQPNVSSLYCQHLGNVAVLMELNAFP) is GPS. A disulfide bond links cysteine 727 and cysteine 741. Residues 770–790 (VVYPCTALLLLCLFSTIITYI) form a helical membrane-spanning segment. The Cytoplasmic portion of the chain corresponds to 791-805 (LNHSSIHVSRKGWHM). A helical membrane pass occupies residues 806–826 (LLNLCFHMAMTSAVFVGGVTL). Residues 827 to 830 (TNYQ) are Extracellular-facing. Residues 831 to 851 (MVCQAVGITLHYSSLSSLLWM) form a helical membrane-spanning segment. The Cytoplasmic segment spans residues 852–884 (GVKARVLHKELSWRAPPLEEGEAAPPGPRPMLR). The chain crosses the membrane as a helical span at residues 885–905 (FYLIAGGIPLIICGITAAVNI). At 906 to 922 (HNYRDHSPYCWLVWRPS) the chain is on the extracellular side. The chain crosses the membrane as a helical span at residues 923–943 (LGAFYIPVALILPITWIYFLC). At 944–1016 (AGLHLRSHVA…DGVYSPGVQL (73 aa)) the chain is on the cytoplasmic side. A helical membrane pass occupies residues 1017 to 1037 (GALMTTHFLYLAMWACGALAV). Over 1038-1044 (SQRWLPR) the chain is Extracellular. The helical transmembrane segment at 1045–1065 (VVCSCLYGVAASALGLFVFTH) threads the bilayer. The Cytoplasmic segment spans residues 1066–1336 (HCARRRDVRA…TGLWKSETTV (271 aa)). Over residues 1084 to 1095 (ASPSASHVPARA) the composition is skewed to low complexity. A disordered region spans residues 1084-1310 (ASPSASHVPA…NGAPKGGKYE (227 aa)). The residue at position 1104 (serine 1104) is a Phosphoserine. The segment covering 1110 to 1124 (GPASLKSSPSGSSGR) has biased composition (low complexity). A compositionally biased stretch (polar residues) spans 1133–1143 (TNLQVAQSQVC). Basic residues predominate over residues 1166–1186 (PRHHNNLHHGRRVHKSRAKGH). A compositionally biased stretch (polar residues) spans 1213 to 1234 (SSESGSLHNSPSDSYPGSSRNS). A PDZ-binding motif is present at residues 1333 to 1336 (ETTV).

The protein belongs to the G-protein coupled receptor 2 family. Adhesion G-protein coupled receptor (ADGR) subfamily. In terms of assembly, interacts with RECK; the interaction is direct. Interacts (via PDZ-binding motif) with DLG1 (via PDZ domains). The cleaved extracellular subunit interacts with the integrin heterodimer ITGAV:ITGB3. Glycosylated. Post-translationally, proteolytically cleaved into two subunits, an extracellular subunit and a seven-transmembrane subunit. Cleaved by thrombin (F2) and MMP1. Also cleaved by MMP9, with lower efficiency. Presence of the protein disulfide-isomerase P4HB at the cell surface is additionally required for shedding of the extracellular subunit, suggesting that the subunits are linked by disulfide bonds. Shedding is enhanced by the growth factor FGF2 and may promote cell survival during angiogenesis. Abundantly expressed in the vasculature of the developing embryo. Expression in normal adult tissues is specifically vascular with endothelial expression in CNS, including brain and retina and more widespread pericyte expression in the brain and organs, including the kidney, pancreas and corpus luteum.

Its subcellular location is the cell membrane. It localises to the cell projection. The protein localises to the filopodium. Functionally, endothelial receptor which functions together with RECK to enable brain endothelial cells to selectively respond to Wnt7 signals (WNT7A or WNT7B). Plays a key role in Wnt7-specific responses, such as endothelial cell sprouting and migration in the forebrain and neural tube, and establishment of the blood-brain barrier. Acts as a Wnt7-specific coactivator of canonical Wnt signaling: required to deliver RECK-bound Wnt7 to frizzled by assembling a higher-order RECK-ADGRA2-Fzd-LRP5-LRP6 complex. ADGRA2-tethering function does not rely on its G-protein coupled receptor (GPCR) structure but instead on its combined capacity to interact with RECK extracellularly and recruit the Dishevelled scaffolding protein intracellularly. Binds to the glycosaminoglycans heparin, heparin sulfate, chondroitin sulfate and dermatan sulfate. The protein is Adhesion G protein-coupled receptor A2 of Mus musculus (Mouse).